The following is a 181-amino-acid chain: dTDP-4-dehydrorhamnose 3,5-epimerase (181 aa).

Substrate-binding positions include arginine 23, glutamate 28, 47–49 (QDN), and arginine 59. The Proton acceptor role is filled by histidine 62. Substrate contacts are provided by lysine 72 and histidine 119. Tyrosine 132 acts as the Proton donor in catalysis. Residues glutamate 143 and lysine 167 each contribute to the substrate site.

Belongs to the dTDP-4-dehydrorhamnose 3,5-epimerase family. Homodimer.

The catalysed reaction is dTDP-4-dehydro-6-deoxy-alpha-D-glucose = dTDP-4-dehydro-beta-L-rhamnose. It functions in the pathway carbohydrate biosynthesis; dTDP-L-rhamnose biosynthesis. It participates in bacterial outer membrane biogenesis; LPS O-antigen biosynthesis. In terms of biological role, catalyzes the epimerization of the C3' and C5'positions of dTDP-6-deoxy-D-xylo-4-hexulose, forming dTDP-6-deoxy-L-lyxo-4-hexulose. This is dTDP-4-dehydrorhamnose 3,5-epimerase (rfbC) from Shigella flexneri.